A 150-amino-acid polypeptide reads, in one-letter code: Large ribosomal subunit protein bL9 (150 aa).

This sequence belongs to the bacterial ribosomal protein bL9 family.

In terms of biological role, binds to the 23S rRNA. The chain is Large ribosomal subunit protein bL9 from Burkholderia cenocepacia (strain HI2424).